An 835-amino-acid polypeptide reads, in one-letter code: Protein translocase subunit SecA 1 (835 aa).

ATP-binding positions include Gln-85, 103 to 107 (GEGKT), and Asp-492. The tract at residues 788–807 (VQGEAVHPSSDGEEAKKKPV) is disordered. Residues Cys-819, Cys-821, Cys-830, and Cys-831 each coordinate Zn(2+).

This sequence belongs to the SecA family. In terms of assembly, monomer and homodimer. Part of the essential Sec protein translocation apparatus which comprises SecA, SecYEG and auxiliary proteins SecDF. Other proteins may also be involved. Zn(2+) serves as cofactor.

The protein resides in the cell membrane. It localises to the cytoplasm. It carries out the reaction ATP + H2O + cellular proteinSide 1 = ADP + phosphate + cellular proteinSide 2.. Functionally, part of the Sec protein translocase complex. Interacts with the SecYEG preprotein conducting channel. Has a central role in coupling the hydrolysis of ATP to the transfer of proteins into and across the cell membrane, serving as an ATP-driven molecular motor driving the stepwise translocation of polypeptide chains across the membrane. This is Protein translocase subunit SecA 1 from Bacillus thuringiensis (strain Al Hakam).